Reading from the N-terminus, the 294-residue chain is Putative glucose-6-phosphate 1-epimerase (294 aa).

The substrate site is built by arginine 74 and arginine 99. Histidine 164 is a catalytic residue. Aspartate 208 contributes to the substrate binding site. Glutamate 267 is an active-site residue.

Belongs to the glucose-6-phosphate 1-epimerase family. Monomer in solution.

It carries out the reaction alpha-D-glucose 6-phosphate = beta-D-glucose 6-phosphate. Its function is as follows. Probably functions as a hexose-6-phosphate 1-epimerase. In Salmonella typhimurium (strain LT2 / SGSC1412 / ATCC 700720), this protein is Putative glucose-6-phosphate 1-epimerase.